The following is a 164-amino-acid chain: UPF0304 protein YfbU (164 aa).

This sequence belongs to the UPF0304 family.

The chain is UPF0304 protein YfbU from Shigella flexneri.